A 459-amino-acid polypeptide reads, in one-letter code: MSTNPPDLRPDLAPKARLTQPDRPGQPTIGMVSLGCPKALVDSERILTRLRAEGYGISPDYDGADAVIVNTCGFLDSAKAESLSAIGEALNENGRVIVTGCLGAEPEYITGAHPKVLAVTGPQQYEQVLDAVHAAVPPSPDPFVDLLPATAVSLTPRHFSYLKISEGCNHKCKFCIIPDMRGRLASRPAHAVMREAEKLVDNGVRELLVISQDTSAFGVDIKHAEERGHRAHITDLARDLGSLGAWVRLHYVYPYPHVRQLIPLMADGLVLPYLDIPFQHAHPDVLRRMARPAAAAKTLDEIAAWRAICPDLTLRSTFIVGYPGETEEEFQTLLDWLDEAQLDRVGCFQYENVAGARSNALPDHVPEDVKQDRWNRFMAKSQDISEAKLAAKVAQRLEVIVDEVDADAATCRTKADAPEIDGNLFIDDGHDGLKPGDIVTVEVDEAGEYDLWGRLAPSA.

Positions methionine 1–threonine 28 are disordered. The MTTase N-terminal domain maps to proline 27–proline 137. Residues cysteine 36, cysteine 72, cysteine 101, cysteine 168, cysteine 172, and cysteine 175 each contribute to the [4Fe-4S] cluster site. The region spanning leucine 154 to alanine 387 is the Radical SAM core domain. Residues alanine 390–proline 457 enclose the TRAM domain.

This sequence belongs to the methylthiotransferase family. RimO subfamily. The cofactor is [4Fe-4S] cluster.

It is found in the cytoplasm. The catalysed reaction is L-aspartate(89)-[ribosomal protein uS12]-hydrogen + (sulfur carrier)-SH + AH2 + 2 S-adenosyl-L-methionine = 3-methylsulfanyl-L-aspartate(89)-[ribosomal protein uS12]-hydrogen + (sulfur carrier)-H + 5'-deoxyadenosine + L-methionine + A + S-adenosyl-L-homocysteine + 2 H(+). Functionally, catalyzes the methylthiolation of an aspartic acid residue of ribosomal protein uS12. This is Ribosomal protein uS12 methylthiotransferase RimO from Roseobacter denitrificans (strain ATCC 33942 / OCh 114) (Erythrobacter sp. (strain OCh 114)).